The primary structure comprises 111 residues: Putative G antigen family E member 3 (111 aa).

The interval 1–67 (MSEHVRTRSQ…EGAPAVQGPD (67 aa)) is disordered. Residues 8–24 (RSQSSERGNDQESSQPV) show a composition bias toward polar residues. Position 97 is a phosphothreonine (threonine 97).

It belongs to the GAGE family.

This is Putative G antigen family E member 3 (PAGE2B) from Homo sapiens (Human).